The chain runs to 300 residues: Nuclear egress protein 1 (300 aa).

A CCCH-type zinc finger spans residues 90-217 (CLSLSGMGYY…YIVFPGKALH (128 aa)).

The protein belongs to the herpesviridae NEC1 protein family. Forms a heterohexameric complex with NEC2. Interacts with capsid vertex specific component 2/CVC2; this interaction directs the capsid to the host inner nuclear membrane to initiate budding. Post-translationally, phosphorylated at serine residues in the N-terminus. This phosphorylation regulates the localization within the inner nuclear membrane.

The protein resides in the host nucleus inner membrane. In terms of biological role, plays an essential role in virion nuclear egress, the first step of virion release from infected cell. Within the host nucleus, NEC1 interacts with the newly formed capsid through the vertexes and directs it to the inner nuclear membrane by associating with NEC2. Induces the budding of the capsid at the inner nuclear membrane as well as its envelopment into the perinuclear space. There, the NEC1/NEC2 complex promotes the fusion of the enveloped capsid with the outer nuclear membrane and the subsequent release of the viral capsid into the cytoplasm where it will reach the secondary budding sites in the host Golgi or trans-Golgi network. This Gallid herpesvirus 2 (strain Chicken/Md5/ATCC VR-987) (GaHV-2) protein is Nuclear egress protein 1.